The sequence spans 184 residues: ATP synthase subunit delta (184 aa).

It belongs to the ATPase delta chain family. F-type ATPases have 2 components, F(1) - the catalytic core - and F(0) - the membrane proton channel. F(1) has five subunits: alpha(3), beta(3), gamma(1), delta(1), epsilon(1). F(0) has three main subunits: a(1), b(2) and c(10-14). The alpha and beta chains form an alternating ring which encloses part of the gamma chain. F(1) is attached to F(0) by a central stalk formed by the gamma and epsilon chains, while a peripheral stalk is formed by the delta and b chains.

It localises to the cell inner membrane. Functionally, f(1)F(0) ATP synthase produces ATP from ADP in the presence of a proton or sodium gradient. F-type ATPases consist of two structural domains, F(1) containing the extramembraneous catalytic core and F(0) containing the membrane proton channel, linked together by a central stalk and a peripheral stalk. During catalysis, ATP synthesis in the catalytic domain of F(1) is coupled via a rotary mechanism of the central stalk subunits to proton translocation. In terms of biological role, this protein is part of the stalk that links CF(0) to CF(1). It either transmits conformational changes from CF(0) to CF(1) or is implicated in proton conduction. The sequence is that of ATP synthase subunit delta from Magnetococcus marinus (strain ATCC BAA-1437 / JCM 17883 / MC-1).